The following is a 547-amino-acid chain: Chaperonin GroEL (547 aa).

ATP-binding positions include 30–33 (TLGP), lysine 51, 87–91 (DGTTT), glycine 415, and aspartate 496.

Belongs to the chaperonin (HSP60) family. In terms of assembly, forms a cylinder of 14 subunits composed of two heptameric rings stacked back-to-back. Interacts with the co-chaperonin GroES.

It localises to the cytoplasm. It carries out the reaction ATP + H2O + a folded polypeptide = ADP + phosphate + an unfolded polypeptide.. In terms of biological role, together with its co-chaperonin GroES, plays an essential role in assisting protein folding. The GroEL-GroES system forms a nano-cage that allows encapsulation of the non-native substrate proteins and provides a physical environment optimized to promote and accelerate protein folding. The polypeptide is Chaperonin GroEL (Chlorobium phaeobacteroides (strain DSM 266 / SMG 266 / 2430)).